We begin with the raw amino-acid sequence, 179 residues long: MSKDLEVAGRYANALFQVAQDKDLVDVFSEELTELKAALNANKDFVKLLENPTFTTEQKKNLASAVFEKINPTLRDFIYLLIDRSREDYLSVIADVYQKRVNDLRGVADADVYSVVPLSEQELTALSRVFAAKMNKTKLNIQNHIDKSLLGGVKVVIGTRIYDDSLKTKLKDMERQIKA.

Belongs to the ATPase delta chain family. In terms of assembly, F-type ATPases have 2 components, F(1) - the catalytic core - and F(0) - the membrane proton channel. F(1) has five subunits: alpha(3), beta(3), gamma(1), delta(1), epsilon(1). F(0) has three main subunits: a(1), b(2) and c(10-14). The alpha and beta chains form an alternating ring which encloses part of the gamma chain. F(1) is attached to F(0) by a central stalk formed by the gamma and epsilon chains, while a peripheral stalk is formed by the delta and b chains.

It is found in the cell membrane. F(1)F(0) ATP synthase produces ATP from ADP in the presence of a proton or sodium gradient. F-type ATPases consist of two structural domains, F(1) containing the extramembraneous catalytic core and F(0) containing the membrane proton channel, linked together by a central stalk and a peripheral stalk. During catalysis, ATP synthesis in the catalytic domain of F(1) is coupled via a rotary mechanism of the central stalk subunits to proton translocation. In terms of biological role, this protein is part of the stalk that links CF(0) to CF(1). It either transmits conformational changes from CF(0) to CF(1) or is implicated in proton conduction. The sequence is that of ATP synthase subunit delta from Listeria innocua serovar 6a (strain ATCC BAA-680 / CLIP 11262).